The primary structure comprises 337 residues: Inositol 2-dehydrogenase (337 aa).

The protein belongs to the Gfo/Idh/MocA family. Homotetramer.

It catalyses the reaction myo-inositol + NAD(+) = scyllo-inosose + NADH + H(+). Functionally, involved in the oxidation of myo-inositol (MI) to 2-keto-myo-inositol (2KMI or 2-inosose). The chain is Inositol 2-dehydrogenase from Pseudarthrobacter chlorophenolicus (strain ATCC 700700 / DSM 12829 / CIP 107037 / JCM 12360 / KCTC 9906 / NCIMB 13794 / A6) (Arthrobacter chlorophenolicus).